The sequence spans 271 residues: Formamidopyrimidine-DNA glycosylase (271 aa).

The Schiff-base intermediate with DNA role is filled by P2. E3 (proton donor) is an active-site residue. K58 functions as the Proton donor; for beta-elimination activity in the catalytic mechanism. Residues H91, R110, and R152 each contribute to the DNA site. An FPG-type zinc finger spans residues 237–271 (SIYGKKGRPCPKCGSAIRMMRLGGRSTFFCPLCQK). R261 (proton donor; for delta-elimination activity) is an active-site residue.

The protein belongs to the FPG family. Monomer. The cofactor is Zn(2+).

The catalysed reaction is Hydrolysis of DNA containing ring-opened 7-methylguanine residues, releasing 2,6-diamino-4-hydroxy-5-(N-methyl)formamidopyrimidine.. The enzyme catalyses 2'-deoxyribonucleotide-(2'-deoxyribose 5'-phosphate)-2'-deoxyribonucleotide-DNA = a 3'-end 2'-deoxyribonucleotide-(2,3-dehydro-2,3-deoxyribose 5'-phosphate)-DNA + a 5'-end 5'-phospho-2'-deoxyribonucleoside-DNA + H(+). In terms of biological role, involved in base excision repair of DNA damaged by oxidation or by mutagenic agents. Acts as a DNA glycosylase that recognizes and removes damaged bases. Has a preference for oxidized purines, such as 7,8-dihydro-8-oxoguanine (8-oxoG). Has AP (apurinic/apyrimidinic) lyase activity and introduces nicks in the DNA strand. Cleaves the DNA backbone by beta-delta elimination to generate a single-strand break at the site of the removed base with both 3'- and 5'-phosphates. This Geotalea daltonii (strain DSM 22248 / JCM 15807 / FRC-32) (Geobacter daltonii) protein is Formamidopyrimidine-DNA glycosylase.